We begin with the raw amino-acid sequence, 966 residues long: Insulin-degrading enzyme-like 2 (966 aa).

H71 contacts Zn(2+). Residue E74 is the Proton acceptor of the active site. Residue H75 participates in Zn(2+) binding. Residue E145 is part of the active site. A Zn(2+)-binding site is contributed by E152.

It belongs to the peptidase M16 family. Requires Zn(2+) as cofactor.

The chain is Insulin-degrading enzyme-like 2 from Arabidopsis thaliana (Mouse-ear cress).